Here is a 232-residue protein sequence, read N- to C-terminus: LexA repressor (232 aa).

Positions 1 to 10 are enriched in polar residues; the sequence is MDDSNDSSSA. Residues 1–22 form a disordered region; that stretch reads MDDSNDSSSAGPDGRLHAVDPS. Positions 47-67 form a DNA-binding region, H-T-H motif; the sequence is IREIGDAVGLTSTSSVAHQLR. Catalysis depends on for autocatalytic cleavage activity residues Ser-156 and Lys-193.

The protein belongs to the peptidase S24 family. In terms of assembly, homodimer.

It catalyses the reaction Hydrolysis of Ala-|-Gly bond in repressor LexA.. In terms of biological role, represses a number of genes involved in the response to DNA damage (SOS response), including recA and lexA. In the presence of single-stranded DNA, RecA interacts with LexA causing an autocatalytic cleavage which disrupts the DNA-binding part of LexA, leading to derepression of the SOS regulon and eventually DNA repair. This is LexA repressor from Mycolicibacterium paratuberculosis (strain ATCC BAA-968 / K-10) (Mycobacterium paratuberculosis).